A 272-amino-acid chain; its full sequence is Flagellin (272 aa).

It belongs to the bacterial flagellin family.

It localises to the secreted. It is found in the bacterial flagellum. Flagellin is the subunit protein which polymerizes to form the filaments of bacterial flagella. The polypeptide is Flagellin (hag) (Halalkalibacterium halodurans (strain ATCC BAA-125 / DSM 18197 / FERM 7344 / JCM 9153 / C-125) (Bacillus halodurans)).